The following is a 338-amino-acid chain: Pseudouridylate synthase TRUB1 (338 aa).

An N-acetylalanine modification is found at Ala-2. The Nucleophile role is filled by Asp-109.

It belongs to the pseudouridine synthase TruB family.

Its subcellular location is the nucleus. The protein localises to the cytoplasm. The protein resides in the cytosol. The catalysed reaction is a uridine in mRNA = a pseudouridine in mRNA. The enzyme catalyses a uridine in tRNA = a pseudouridine in tRNA. It catalyses the reaction uridine(55) in tRNA = pseudouridine(55) in tRNA. Its function is as follows. Pseudouridine synthase that catalyzes pseudouridylation of mRNAs and tRNAs. Mediates pseudouridylation of mRNAs with the consensus sequence 5'-GUUCNANNC-3', harboring a stem-loop structure. Constitutes the major pseudouridine synthase acting on mRNAs. Also catalyzes pseudouridylation of some tRNAs, including synthesis of pseudouridine(55) from uracil-55, in the psi GC loop of a subset of tRNAs. Promotes the processing of pri-let-7 microRNAs (pri-miRNAs) independently of its RNA pseudouridylate synthase activity. Acts by binding to the stem-loop structure on pri-let-7, preventing LIN28-binding (LIN28A and/or LIN28B), thereby enhancing the interaction between pri-let-7 and the microprocessor DGCR8, which mediates miRNA maturation. The protein is Pseudouridylate synthase TRUB1 of Mus musculus (Mouse).